Reading from the N-terminus, the 185-residue chain is DAN domain family member 5 (185 aa).

The signal sequence occupies residues methionine 1 to glycine 23. An N-linked (GlcNAc...) asparagine glycan is attached at asparagine 39. Intrachain disulfides connect cysteine 97–cysteine 144, cysteine 111–cysteine 158, cysteine 121–cysteine 179, and cysteine 125–cysteine 181. The 86-residue stretch at cysteine 97–arginine 182 folds into the CTCK domain.

The protein belongs to the DAN family. As to expression, expressed throughout the neural retina and in the photoreceptor nuclear layer. In the retina, widely expressed in inner nuclear layer, as well as in the ganglion cell layer.

Its subcellular location is the secreted. Antagonist of the extracellular signaling protein NODAL, which is required for correct left-right patterning during embryonic development. Antagonist of BMP4 signaling. Antagonist of TGF-beta signaling. Independently of its role in left-right axis establishment, plays a role during heart development, possibly through the regulation of TGF-beta/Nodal signaling pathway. Displays anti-angiogenic activity by inhibiting endothelial sprouting, migration, and proliferation. Once internalized by endothelial cells, may alter their redox and glycolytic balance. This Mus musculus (Mouse) protein is DAN domain family member 5 (Dand5).